Consider the following 291-residue polypeptide: ATP synthase gamma chain (291 aa).

The protein belongs to the ATPase gamma chain family. In terms of assembly, F-type ATPases have 2 components, CF(1) - the catalytic core - and CF(0) - the membrane proton channel. CF(1) has five subunits: alpha(3), beta(3), gamma(1), delta(1), epsilon(1). CF(0) has three main subunits: a, b and c.

Its subcellular location is the cell inner membrane. In terms of biological role, produces ATP from ADP in the presence of a proton gradient across the membrane. The gamma chain is believed to be important in regulating ATPase activity and the flow of protons through the CF(0) complex. The protein is ATP synthase gamma chain of Chlorobium phaeobacteroides (strain DSM 266 / SMG 266 / 2430).